The following is a 99-amino-acid chain: Aspartyl/glutamyl-tRNA(Asn/Gln) amidotransferase subunit C (99 aa).

It belongs to the GatC family. As to quaternary structure, heterotrimer of A, B and C subunits.

It carries out the reaction L-glutamyl-tRNA(Gln) + L-glutamine + ATP + H2O = L-glutaminyl-tRNA(Gln) + L-glutamate + ADP + phosphate + H(+). It catalyses the reaction L-aspartyl-tRNA(Asn) + L-glutamine + ATP + H2O = L-asparaginyl-tRNA(Asn) + L-glutamate + ADP + phosphate + 2 H(+). Functionally, allows the formation of correctly charged Asn-tRNA(Asn) or Gln-tRNA(Gln) through the transamidation of misacylated Asp-tRNA(Asn) or Glu-tRNA(Gln) in organisms which lack either or both of asparaginyl-tRNA or glutaminyl-tRNA synthetases. The reaction takes place in the presence of glutamine and ATP through an activated phospho-Asp-tRNA(Asn) or phospho-Glu-tRNA(Gln). This chain is Aspartyl/glutamyl-tRNA(Asn/Gln) amidotransferase subunit C, found in Cupriavidus taiwanensis (strain DSM 17343 / BCRC 17206 / CCUG 44338 / CIP 107171 / LMG 19424 / R1) (Ralstonia taiwanensis (strain LMG 19424)).